A 153-amino-acid polypeptide reads, in one-letter code: Actin-related protein 2/3 complex subunit 5-like protein (153 aa).

Ser64 carries the phosphoserine modification.

This sequence belongs to the ARPC5 family. As to quaternary structure, may be a component of the Arp2/3 complex in which it may replace ARPC5.

The protein resides in the cytoplasm. It localises to the cytoskeleton. May function as component of the Arp2/3 complex which is involved in regulation of actin polymerization and together with an activating nucleation-promoting factor (NPF) mediates the formation of branched actin networks. The protein is Actin-related protein 2/3 complex subunit 5-like protein (Arpc5l) of Rattus norvegicus (Rat).